Here is a 346-residue protein sequence, read N- to C-terminus: 3',5'-cyclic-nucleotide phosphodiesterase (346 aa).

The protein belongs to the cyclic nucleotide phosphodiesterase class-II family.

The enzyme catalyses a nucleoside 3',5'-cyclic phosphate + H2O = a nucleoside 5'-phosphate + H(+). In Schizosaccharomyces pombe (strain 972 / ATCC 24843) (Fission yeast), this protein is 3',5'-cyclic-nucleotide phosphodiesterase (cgs2).